The primary structure comprises 248 residues: Triosephosphate isomerase (248 aa).

Substrate contacts are provided by asparagine 11 and lysine 13. The Electrophile role is filled by histidine 95. The Proton acceptor role is filled by glutamate 165.

Belongs to the triosephosphate isomerase family. In terms of assembly, homodimer.

Its subcellular location is the cytoplasm. It catalyses the reaction dihydroxyacetone phosphate = methylglyoxal + phosphate. The catalysed reaction is D-glyceraldehyde 3-phosphate = dihydroxyacetone phosphate. It functions in the pathway carbohydrate degradation; glycolysis; D-glyceraldehyde 3-phosphate from glycerone phosphate: step 1/1. It participates in carbohydrate biosynthesis; gluconeogenesis. Functionally, triosephosphate isomerase is an extremely efficient metabolic enzyme that catalyzes the interconversion between dihydroxyacetone phosphate (DHAP) and D-glyceraldehyde-3-phosphate (G3P) in glycolysis and gluconeogenesis. In terms of biological role, it is also responsible for the non-negligible production of methylglyoxal a reactive cytotoxic side-product that modifies and can alter proteins, DNA and lipids. The chain is Triosephosphate isomerase (TPI1) from Gallus gallus (Chicken).